Reading from the N-terminus, the 104-residue chain is Large ribosomal subunit protein uL24 (104 aa).

It belongs to the universal ribosomal protein uL24 family. Part of the 50S ribosomal subunit.

In terms of biological role, one of two assembly initiator proteins, it binds directly to the 5'-end of the 23S rRNA, where it nucleates assembly of the 50S subunit. One of the proteins that surrounds the polypeptide exit tunnel on the outside of the subunit. This Nitrobacter hamburgensis (strain DSM 10229 / NCIMB 13809 / X14) protein is Large ribosomal subunit protein uL24.